Consider the following 277-residue polypeptide: Putative pyruvate, phosphate dikinase regulatory protein (277 aa).

151–158 lines the ADP pocket; sequence GISRTSKT.

Belongs to the pyruvate, phosphate/water dikinase regulatory protein family. PDRP subfamily.

It catalyses the reaction N(tele)-phospho-L-histidyl/L-threonyl-[pyruvate, phosphate dikinase] + ADP = N(tele)-phospho-L-histidyl/O-phospho-L-threonyl-[pyruvate, phosphate dikinase] + AMP + H(+). It carries out the reaction N(tele)-phospho-L-histidyl/O-phospho-L-threonyl-[pyruvate, phosphate dikinase] + phosphate + H(+) = N(tele)-phospho-L-histidyl/L-threonyl-[pyruvate, phosphate dikinase] + diphosphate. Its function is as follows. Bifunctional serine/threonine kinase and phosphorylase involved in the regulation of the pyruvate, phosphate dikinase (PPDK) by catalyzing its phosphorylation/dephosphorylation. In Alkaliphilus metalliredigens (strain QYMF), this protein is Putative pyruvate, phosphate dikinase regulatory protein.